Reading from the N-terminus, the 389-residue chain is Ecto-ADP-ribosyltransferase 3 (389 aa).

Positions 1–26 (MKTGHFEIVTMLLATMILVDIFQVKA) are cleaved as a signal peptide. Cys43 and Cys256 are disulfide-bonded. A TR mART core domain is found at 64-251 (QQLDTVWENA…LILQSINKTC (188 aa)). NAD(+)-binding residues include Tyr101 and Arg163. Asn248 carries N-linked (GlcNAc...) asparagine glycosylation. Repeat copies occupy residues 283–292 (GEKNQKLEDH), 293–302 (SEKNWKLEDH), and 303–312 (GEKNQKLEDH). The tract at residues 283 to 312 (GEKNQKLEDHSEKNWKLEDHGEKNQKLEDH) is 3 X 10 AA tandem repeats of [GS]-E-K-N-[QW]-K-L-E-D-H. Residues 325 to 362 (MKIPEPFPLPEDKSQGNINNPTPGPVPVPGPKSHPSAS) are disordered. The O-linked (GalNAc...) threonine glycan is linked to Thr346. Positions 346 to 356 (TPGPVPVPGPK) are enriched in pro residues. The GPI-anchor amidated serine moiety is linked to residue Ser362. A propeptide spans 363–389 (SGKLLLPQFGMVIILISVSAINLFVAL) (removed in mature form).

The protein belongs to the Arg-specific ADP-ribosyltransferase family. Post-translationally, O-glycosylated with core 1 or possibly core 8 glycans. In terms of tissue distribution, testis specific.

The protein localises to the cell membrane. It carries out the reaction L-arginyl-[protein] + NAD(+) = N(omega)-(ADP-D-ribosyl)-L-arginyl-[protein] + nicotinamide + H(+). The sequence is that of Ecto-ADP-ribosyltransferase 3 (ART3) from Homo sapiens (Human).